The following is a 185-amino-acid chain: Methanol dehydrogenase activator (185 aa).

It belongs to the Nudix hydrolase family. Homodimer. The cofactor is Mg(2+).

Its function is as follows. Involved in the activation of the NAD-dependent methanol dehydrogenase (MDH). MDH activation by Act involves hydrolytic removal of the nicotinamide mononucleotide (NMN) moiety of the NAD cofactor, changing its ping-pong type of reaction mechanism into a ternary complex reaction mechanism. It requires the presence of magnesium ions and is also able to use ADP-ribose. This chain is Methanol dehydrogenase activator, found in Bacillus methanolicus.